Here is a 301-residue protein sequence, read N- to C-terminus: MPELPEVETVKRGLAPTMEGALLVRAELRRPDLRFPFPENFANAVAGRRIIALSRRAKYLMIELEGGDVIIAHLGMSGSFRIEKGPIEAGADPATPGAFHHPRGKDEKHDHVVFHLDGGSGPARVIYNDPRRFGFMDLARRSALADHVFLRGLGEEPTGNALDAAYLATRFAGKIQPLKAALLDQRTIAGLGNIYVCEALWRSGLSPKRSAGTLVDKRGRPKQALIALTERIRAVIADAIAAGGSSLKDHIQADGSLGYFQHSFSVYDREGEACRTPGCHGTVARIVQAGRSTFYCPHCQK.

Proline 2 serves as the catalytic Schiff-base intermediate with DNA. The active-site Proton donor is the glutamate 3. The active-site Proton donor; for beta-elimination activity is lysine 58. Histidine 109, arginine 131, and lysine 174 together coordinate DNA. Residues 265-301 (SVYDREGEACRTPGCHGTVARIVQAGRSTFYCPHCQK) form an FPG-type zinc finger. The active-site Proton donor; for delta-elimination activity is arginine 291.

It belongs to the FPG family. As to quaternary structure, monomer. Zn(2+) is required as a cofactor.

The enzyme catalyses Hydrolysis of DNA containing ring-opened 7-methylguanine residues, releasing 2,6-diamino-4-hydroxy-5-(N-methyl)formamidopyrimidine.. It carries out the reaction 2'-deoxyribonucleotide-(2'-deoxyribose 5'-phosphate)-2'-deoxyribonucleotide-DNA = a 3'-end 2'-deoxyribonucleotide-(2,3-dehydro-2,3-deoxyribose 5'-phosphate)-DNA + a 5'-end 5'-phospho-2'-deoxyribonucleoside-DNA + H(+). Functionally, involved in base excision repair of DNA damaged by oxidation or by mutagenic agents. Acts as a DNA glycosylase that recognizes and removes damaged bases. Has a preference for oxidized purines, such as 7,8-dihydro-8-oxoguanine (8-oxoG). Has AP (apurinic/apyrimidinic) lyase activity and introduces nicks in the DNA strand. Cleaves the DNA backbone by beta-delta elimination to generate a single-strand break at the site of the removed base with both 3'- and 5'-phosphates. This Rhizobium meliloti (strain 1021) (Ensifer meliloti) protein is Formamidopyrimidine-DNA glycosylase (mutM).